The following is a 519-amino-acid chain: Importin subunit alpha-9 (519 aa).

The interval M1 to Q29 is disordered. 8 ARM repeats span residues F116–A156, K158–G197, E200–K239, K244–A283, D286–A326, I335–A374, I377–V416, and Q429–R468.

Belongs to the importin alpha family. Forms a complex with importin subunit beta-1.

It localises to the nucleus envelope. Functionally, binds to conventional NLS motifs and mediates nuclear protein import across the nuclear envelope. Acts as a cellular receptor for the nuclear import of the virD2 protein of Agrobacterium, but is not essential for Agrobacterium-mediated root transformation. This is Importin subunit alpha-9 from Arabidopsis thaliana (Mouse-ear cress).